Consider the following 393-residue polypeptide: 26S proteasome regulatory subunit RPN9 (393 aa).

In terms of domain architecture, PCI spans 187-355; the sequence is SFYYTSLLYL…ELVTISWVQP (169 aa).

The protein belongs to the proteasome subunit S11 family.

Its function is as follows. Acts as a regulatory subunit of the 26S proteasome which is involved in the ATP-dependent degradation of ubiquitinated proteins. This chain is 26S proteasome regulatory subunit RPN9 (RPN9), found in Saccharomyces cerevisiae (strain ATCC 204508 / S288c) (Baker's yeast).